The following is a 334-amino-acid chain: Protein-methionine-sulfoxide reductase catalytic subunit MsrP (334 aa).

The segment at residues 1–44 (MKAVNPLTENDVTPESLFNARRRTVLKMLGMSAAALSLPGAARA) is a signal peptide (tat-type signal). Mo-molybdopterin is bound by residues Asn-88, 91–92 (YE), Cys-146, Thr-181, Asn-233, Arg-238, and 249–251 (GIK).

The protein belongs to the MsrP family. In terms of assembly, heterodimer of a catalytic subunit (MsrP) and a heme-binding subunit (MsrQ). It depends on Mo-molybdopterin as a cofactor. Predicted to be exported by the Tat system. The position of the signal peptide cleavage has not been experimentally proven.

Its subcellular location is the periplasm. It catalyses the reaction L-methionyl-[protein] + a quinone + H2O = L-methionyl-(S)-S-oxide-[protein] + a quinol. The enzyme catalyses L-methionyl-[protein] + a quinone + H2O = L-methionyl-(R)-S-oxide-[protein] + a quinol. Part of the MsrPQ system that repairs oxidized periplasmic proteins containing methionine sulfoxide residues (Met-O), using respiratory chain electrons. Thus protects these proteins from oxidative-stress damage caused by reactive species of oxygen and chlorine generated by the host defense mechanisms. MsrPQ is essential for the maintenance of envelope integrity under bleach stress, rescuing a wide series of structurally unrelated periplasmic proteins from methionine oxidation. The catalytic subunit MsrP is non-stereospecific, being able to reduce both (R-) and (S-) diastereoisomers of methionine sulfoxide. The polypeptide is Protein-methionine-sulfoxide reductase catalytic subunit MsrP (Erwinia tasmaniensis (strain DSM 17950 / CFBP 7177 / CIP 109463 / NCPPB 4357 / Et1/99)).